The sequence spans 1695 residues: Sialoadhesin (1695 aa).

The first 19 residues, 1 to 19 (MCVLFSLLLLASVFSLGQT), serve as a signal peptide directing secretion. Residues 20 to 136 (TWGVSSPKNV…DVKGTTVTVT (117 aa)) enclose the Ig-like V-type domain. Over 20-1639 (TWGVSSPKNV…ALHQLQLFQR (1620 aa)) the chain is Extracellular. 4 disulfides stabilise this stretch: Cys36/Cys166, Cys41/Cys98, Cys160/Cys218, and Cys263/Cys306. N-acetylneuraminate contacts are provided by residues Tyr63, Arg116, and 122–126 (SNRWL). Ig-like C2-type domains lie at 153–235 (GMER…YLQV), 239–321 (PKGV…SPLS), 326–406 (MAEV…SPLS), 416–508 (PDLT…LDFY), 509–594 (ANVA…TVLT), 602–701 (PTFT…ASFN), 704–781 (ATVL…AQLS), 795–890 (PKLS…FQVR), 894–973 (VQVS…APVS), 980–1079 (PRHV…ADFD), 1081–1161 (QAVR…RPVT), 1172–1264 (RLTY…MNPS), 1245–1337 (KANT…ASLQ), 1342–1439 (PRDA…RLLT), 1442–1520 (DIRV…ATTS), and 1534–1627 (PTLI…AYFG). Asn159 carries an N-linked (GlcNAc...) asparagine glycan. N-linked (GlcNAc...) asparagine glycosylation is found at Asn266, Asn299, and Asn340. Disulfide bonds link Cys347-Cys391 and Cys434-Cys492. Asn500 is a glycosylation site (N-linked (GlcNAc...) asparagine). Residues Cys532 and Cys576 are joined by a disulfide bond. Asn583 carries N-linked (GlcNAc...) asparagine glycosylation. Residues Cys625 and Cys685 are joined by a disulfide bond. 3 N-linked (GlcNAc...) asparagine glycosylation sites follow: Asn693, Asn722, and Asn737. Intrachain disulfides connect Cys725–Cys770 and Cys813–Cys872. Positions 827–829 (RGD) match the Cell attachment site motif. A glycan (N-linked (GlcNAc...) asparagine) is linked at Asn882. 2 cysteine pairs are disulfide-bonded: Cys912/Cys956 and Cys1001/Cys1063. 2 N-linked (GlcNAc...) asparagine glycosylation sites follow: Asn1090 and Asn1100. Cystine bridges form between Cys1103/Cys1145 and Cys1189/Cys1237. N-linked (GlcNAc...) asparagine glycosylation is present at Asn1247. Disulfide bonds link Cys1277/Cys1320 and Cys1363/Cys1422. 2 N-linked (GlcNAc...) asparagine glycosylation sites follow: Asn1460 and Asn1474. Intrachain disulfides connect Cys1463–Cys1509 and Cys1552–Cys1611. A helical membrane pass occupies residues 1640–1660 (LLWVLGFLAGFLCLLLGLVAY). The Cytoplasmic segment spans residues 1661–1695 (HTWRKKSSTKLNEDENSAEMATKKNTIQEEVVAAL).

The protein belongs to the immunoglobulin superfamily. SIGLEC (sialic acid binding Ig-like lectin) family. In terms of assembly, interacts with CLEC10A. As to expression, detected in lymph node in the subcapsular sinus, interfollicular regions, and T and B-cell boundary (at protein level). Expressed by macrophages in various tissues. Highest expression in spleen and lymph node with lower amounts in lung, liver, bone marrow, heart and skin. No expression in thymus, kidney, brain or small intestine.

The protein localises to the cell membrane. Its subcellular location is the secreted. Its function is as follows. Macrophage-restricted adhesion molecule that mediates sialic-acid dependent binding to lymphocytes, including granulocytes, monocytes, natural killer cells, B-cells and CD8 T-cells. Plays a crucial role in limiting bacterial dissemination by engaging sialylated bacteria to promote effective phagocytosis and antigen presentation for the adaptive immune response. Mediates the uptake of various enveloped viruses via sialic acid recognition and subsequently induces the formation of intracellular compartments filled with virions (VCCs). In turn, enhances macrophage-to-T-cell transmission of several viruses including murine leukemia virus. Acts as an endocytic receptor mediating clathrin dependent endocytosis. Preferentially binds to alpha-2,3-linked sialic acid. Binds to SPN/CD43 on T-cells. May play a role in hemopoiesis. Plays a role in the inhibition of antiviral innate immune by promoting TBK1 degradation via TYROBP and TRIM27-mediated ubiquitination. The chain is Sialoadhesin (Siglec1) from Mus musculus (Mouse).